Here is an 89-residue protein sequence, read N- to C-terminus: Small ribosomal subunit protein uS15 (89 aa).

This sequence belongs to the universal ribosomal protein uS15 family. Part of the 30S ribosomal subunit. Forms a bridge to the 50S subunit in the 70S ribosome, contacting the 23S rRNA.

In terms of biological role, one of the primary rRNA binding proteins, it binds directly to 16S rRNA where it helps nucleate assembly of the platform of the 30S subunit by binding and bridging several RNA helices of the 16S rRNA. Its function is as follows. Forms an intersubunit bridge (bridge B4) with the 23S rRNA of the 50S subunit in the ribosome. The sequence is that of Small ribosomal subunit protein uS15 from Pseudomonas putida (Arthrobacter siderocapsulatus).